The primary structure comprises 429 residues: Adenylosuccinate synthetase (429 aa).

GTP contacts are provided by residues 12–18 and 40–42; these read GDEGKGK and GHT. Asp13 functions as the Proton acceptor in the catalytic mechanism. 2 residues coordinate Mg(2+): Asp13 and Gly40. IMP contacts are provided by residues 13 to 16, 38 to 41, Thr129, Arg143, Gln223, Thr238, and Arg302; these read DEGK and NAGH. His41 acts as the Proton donor in catalysis. Residue 298 to 304 participates in substrate binding; that stretch reads TVTGRPR. Residues Arg304, 330 to 332, and 412 to 414 each bind GTP; these read KLD and STS.

It belongs to the adenylosuccinate synthetase family. Homodimer. Requires Mg(2+) as cofactor.

The protein resides in the cytoplasm. The catalysed reaction is IMP + L-aspartate + GTP = N(6)-(1,2-dicarboxyethyl)-AMP + GDP + phosphate + 2 H(+). The protein operates within purine metabolism; AMP biosynthesis via de novo pathway; AMP from IMP: step 1/2. Plays an important role in the de novo pathway of purine nucleotide biosynthesis. Catalyzes the first committed step in the biosynthesis of AMP from IMP. The protein is Adenylosuccinate synthetase of Gluconobacter oxydans (strain 621H) (Gluconobacter suboxydans).